The chain runs to 424 residues: D-inositol 3-phosphate glycosyltransferase (424 aa).

Residue His9 participates in 1D-myo-inositol 3-phosphate binding. Residues 15-16 (QP) and Gly23 each bind UDP-N-acetyl-alpha-D-glucosamine. 1D-myo-inositol 3-phosphate contacts are provided by residues 20–25 (DSGGMN), Lys78, Tyr110, Thr134, and Arg154. Residues Arg231, Lys236, and Arg294 each contribute to the UDP-N-acetyl-alpha-D-glucosamine site. Positions 303, 304, and 306 each coordinate Mg(2+). Residues Glu316 and Glu324 each coordinate UDP-N-acetyl-alpha-D-glucosamine. Thr330 serves as a coordination point for Mg(2+).

The protein belongs to the glycosyltransferase group 1 family. MshA subfamily. Homodimer.

It carries out the reaction 1D-myo-inositol 3-phosphate + UDP-N-acetyl-alpha-D-glucosamine = 1D-myo-inositol 2-acetamido-2-deoxy-alpha-D-glucopyranoside 3-phosphate + UDP + H(+). Catalyzes the transfer of a N-acetyl-glucosamine moiety to 1D-myo-inositol 3-phosphate to produce 1D-myo-inositol 2-acetamido-2-deoxy-glucopyranoside 3-phosphate in the mycothiol biosynthesis pathway. In Corynebacterium efficiens (strain DSM 44549 / YS-314 / AJ 12310 / JCM 11189 / NBRC 100395), this protein is D-inositol 3-phosphate glycosyltransferase.